A 507-amino-acid chain; its full sequence is Anaerobic nitric oxide reductase transcription regulator NorR (507 aa).

Asp-57 bears the 4-aspartylphosphate mark. Positions 188–417 (IIGLSSVMQQ…LEHSIYRAAI (230 aa)) constitute a Sigma-54 factor interaction domain. ATP is bound by residues 216 to 223 (GETGVGKE) and 279 to 288 (ADNGTLFLDE). A DNA-binding region (H-T-H motif) is located at residues 483 to 502 (WAATARKLELDSGNLHRLAK).

It functions in the pathway nitrogen metabolism; nitric oxide reduction. Functionally, required for the expression of anaerobic nitric oxide (NO) reductase, acts as a transcriptional activator for at least the norVW operon. Activation also requires sigma-54. The chain is Anaerobic nitric oxide reductase transcription regulator NorR from Serratia proteamaculans (strain 568).